Consider the following 429-residue polypeptide: Glycogenin-1 (429 aa).

Positions 8, 10, 11, 14, and 76 each coordinate UDP. UDP-alpha-D-glucose contacts are provided by leucine 8, threonine 10, asparagine 11, tyrosine 14, arginine 76, lysine 85, aspartate 101, alanine 102, aspartate 103, asparagine 132, serine 133, aspartate 159, aspartate 162, and glutamine 163. Residues aspartate 101, alanine 102, and aspartate 103 each coordinate UDP. Position 101 (aspartate 101) interacts with Mn(2+). Aspartate 103 lines the Mn(2+) pocket. The O-linked (Glc...) tyrosine glycan is linked to tyrosine 194. Histidine 211, glycine 214, and lysine 217 together coordinate UDP. Histidine 211 is a Mn(2+) binding site. Residues glycine 214 and lysine 217 each contribute to the UDP-alpha-D-glucose site. Disordered regions lie at residues valine 254 to isoleucine 274 and serine 300 to histidine 338. 2 stretches are compositionally biased toward basic and acidic residues: residues glutamate 263–isoleucine 274 and aspartate 309–histidine 338.

The protein belongs to the glycosyltransferase 8 family. Glycogenin subfamily. Forms a heterooctamer with one molecule of gyg-1 bound to each protomer of the gys-1 homotetramer. The N-terminus of gys-1 is involved in interprotomer contacts with gyg-1. The interaction with gys-1 is required for glycogen production but is not required for gys-1 intrinsic activity. It depends on Mn(2+) as a cofactor. In terms of processing, self-glycosylated by the transfer of glucose residues from UDP-glucose to itself, forming an alpha-1,4-glycan of around 10 residues attached to Tyr-194.

The protein resides in the cytoplasm. It is found in the nucleus. It carries out the reaction L-tyrosyl-[glycogenin] + UDP-alpha-D-glucose = alpha-D-glucosyl-L-tyrosyl-[glycogenin] + UDP + H(+). The catalysed reaction is [1,4-alpha-D-glucosyl](n)-L-tyrosyl-[glycogenin] + UDP-alpha-D-glucose = [1,4-alpha-D-glucosyl](n+1)-L-tyrosyl-[glycogenin] + UDP + H(+). It participates in glycan biosynthesis; glycogen biosynthesis. Its function is as follows. Self-glucosylating initiator of glycogen synthesis. It catalyzes the formation of a short alpha (1,4)-glucosyl chain covalently attached via a glucose 1-O-tyrosyl linkage to internal tyrosine residues and these chains act as primers for the elongation reaction catalyzed by glycogen synthase. This is Glycogenin-1 from Caenorhabditis elegans.